The primary structure comprises 240 residues: Tetrahydromethanopterin S-methyltransferase subunit A (240 aa).

At 1 to 218 (MADKKEPAPG…KFHSGVHAGK (218 aa)) the chain is on the cytoplasmic side. A 5-hydroxybenzimidazolylcob(I)amide-binding site is contributed by H85. The chain crosses the membrane as a helical span at residues 219-239 (IEGAMIGLTVTISLLGLLLLG). Residue R240 is a topological domain, extracellular.

This sequence belongs to the MtrA family. The complex is composed of 8 subunits; MtrA, MtrB, MtrC, MtrD, MtrE, MtrF, MtrG and MtrH. 5-hydroxybenzimidazolylcob(I)amide is required as a cofactor.

It localises to the cell membrane. It carries out the reaction 5-methyl-5,6,7,8-tetrahydromethanopterin + coenzyme M + 2 Na(+)(in) = 5,6,7,8-tetrahydromethanopterin + methyl-coenzyme M + 2 Na(+)(out). It functions in the pathway one-carbon metabolism; methanogenesis from CO(2); methyl-coenzyme M from 5,10-methylene-5,6,7,8-tetrahydromethanopterin: step 2/2. Its function is as follows. Part of a complex that catalyzes the formation of methyl-coenzyme M and tetrahydromethanopterin from coenzyme M and methyl-tetrahydromethanopterin. This is an energy-conserving, sodium-ion translocating step. This chain is Tetrahydromethanopterin S-methyltransferase subunit A, found in Methanosarcina barkeri (strain Fusaro / DSM 804).